The following is a 150-amino-acid chain: Snaclec bothrojaracin subunit beta (150 aa).

The signal sequence occupies residues M1–A23. Disulfide bonds link C25-C36, C53-C146, and C123-C138. One can recognise a C-type lectin domain in the interval Y32 to E147.

The protein belongs to the snaclec family. As to quaternary structure, heterodimer of subunits alpha and beta; disulfide-linked. As to expression, expressed by the venom gland.

It is found in the secreted. This potent antithrombotic agent acts in a calcium-independent manner. Exerts its anticoagulant effect by two distinct mechanisms. It binds to activated thrombin through exosite 1, blocking fibrinogen clotting, platelet activation, factor V activation and other effects, and it interacts with prothrombin (F2), decreasing its proteolytic activation -especially in the presence of factor Va. In vivo, intravenous injection before thrombosis induction causes a significant decrease in thrombus weight. Furthermore, BJC shows a prolonged effect by remaining in the plasma bound to prothrombin for at least 12 hours. This Bothrops jararaca (Jararaca) protein is Snaclec bothrojaracin subunit beta.